Here is a 78-residue protein sequence, read N- to C-terminus: Broad mercury transporter MerE (78 aa).

A run of 2 helical transmembrane segments spans residues 19-39 (LWGA…AAVL) and 47-67 (FLGE…VLAV).

It is found in the cell inner membrane. Functionally, broad mercury transporter that mediates the transport of both CH(3)Hg(I) and Hg(II) across the membrane. This is Broad mercury transporter MerE from Shigella flexneri.